Consider the following 346-residue polypeptide: Probable disease resistance protein At5g45440 (346 aa).

Residues 38–116 form the NB-ARC domain; it reads KQVEDRVETD…AYAPRIWVSM (79 aa). Position 85-92 (85-92) interacts with ATP; sequence GEYGVGKT. The tract at residues 315–346 is disordered; sequence FDDGKANQNGSKDGKTDSVDNPNSEESKTKPL.

Possible disease resistance protein. The sequence is that of Probable disease resistance protein At5g45440 from Arabidopsis thaliana (Mouse-ear cress).